A 400-amino-acid polypeptide reads, in one-letter code: Subtilisin-like protease 11 (400 aa).

The N-terminal stretch at Met1–Ala19 is a signal peptide. Residues Ala20–Ser117 constitute a propeptide that is removed on maturation. In terms of domain architecture, Inhibitor I9 spans Ser35–Ile116. One can recognise a Peptidase S8 domain in the interval Ser127–Lys400. A glycan (N-linked (GlcNAc...) asparagine) is linked at Asn138. Residue Asp159 is the Charge relay system of the active site. Asn181 carries an N-linked (GlcNAc...) asparagine glycan. The Charge relay system role is filled by His191. N-linked (GlcNAc...) asparagine glycans are attached at residues Asn252 and Asn337. Ser346 acts as the Charge relay system in catalysis. Asn388 and Asn396 each carry an N-linked (GlcNAc...) asparagine glycan.

Belongs to the peptidase S8 family.

The protein localises to the secreted. Secreted subtilisin-like serine protease with keratinolytic activity that contributes to pathogenicity. This chain is Subtilisin-like protease 11 (SUB11), found in Trichophyton verrucosum (strain HKI 0517).